A 363-amino-acid polypeptide reads, in one-letter code: Cellular tumor antigen p53 (363 aa).

The interval 1 to 29 is transcription activation (acidic); it reads MEPSSETGMDPPLSQETFEDLWSLLPDPL. A DNA-binding region spans residues 76 to 267; that stretch reads DYAGKYGLQL…RTEEDNYTKK (192 aa). Cys-150, His-153, Cys-213, and Cys-217 together coordinate Zn(2+). Positions 248–255 are interaction with DNA; the sequence is RVCACPGR. A disordered region spans residues 257-290; the sequence is RRTEEDNYTKKRGLKPSGKRELAHPPSSEPPLPK. Residues 275-292 carry the Bipartite nuclear localization signal motif; the sequence is KRELAHPPSSEPPLPKKR. The segment at 300-331 is oligomerization; it reads EEIFTLRIKGRSRYEMIKKLNDALELQESLDQ. The Nuclear export signal signature appears at 314–325; it reads EMIKKLNDALEL. The interval 344-356 is basic (repression of DNA-binding); that stretch reads EIKPKKGKKLLVK.

The protein belongs to the p53 family. Binds DNA as a homotetramer. Requires Zn(2+) as cofactor. As to expression, ubiquitous.

The protein localises to the cytoplasm. Its subcellular location is the nucleus. Multifunctional transcription factor that induces cell cycle arrest, DNA repair or apoptosis upon binding to its target DNA sequence. Acts as a tumor suppressor in many tumor types; induces growth arrest or apoptosis depending on the physiological circumstances and cell type. Negatively regulates cell division by controlling expression of a set of genes required for this process. One of the activated genes is an inhibitor of cyclin-dependent kinases. Apoptosis induction seems to be mediated either by stimulation of BAX and FAS antigen expression, or by repression of Bcl-2 expression. The chain is Cellular tumor antigen p53 (tp53) from Xenopus laevis (African clawed frog).